The following is a 214-amino-acid chain: MRVALIDYGSGNLRSAAKALERAARDGGVAAEIVVTRDVEGVLGADRVVLPGVGAFANCRRGLQGIDGMVEALAEVALVRARPFLGICVGMQLLADEGVEYGRHPGLGWIGGTVEAISPADPALKIPHMGWNSLDFQADSHALLAGIEPGTHVYFVHSYHFRPADPATRLASVEYGGPLTAMIGRENLVGTQFHPEKSQAAGLRLIANFLRWAP.

The Glutamine amidotransferase type-1 domain occupies Arg-2–Pro-214. Cys-88 (nucleophile) is an active-site residue. Residues His-194 and Glu-196 contribute to the active site.

As to quaternary structure, heterodimer of HisH and HisF.

Its subcellular location is the cytoplasm. The enzyme catalyses 5-[(5-phospho-1-deoxy-D-ribulos-1-ylimino)methylamino]-1-(5-phospho-beta-D-ribosyl)imidazole-4-carboxamide + L-glutamine = D-erythro-1-(imidazol-4-yl)glycerol 3-phosphate + 5-amino-1-(5-phospho-beta-D-ribosyl)imidazole-4-carboxamide + L-glutamate + H(+). The catalysed reaction is L-glutamine + H2O = L-glutamate + NH4(+). It participates in amino-acid biosynthesis; L-histidine biosynthesis; L-histidine from 5-phospho-alpha-D-ribose 1-diphosphate: step 5/9. Functionally, IGPS catalyzes the conversion of PRFAR and glutamine to IGP, AICAR and glutamate. The HisH subunit catalyzes the hydrolysis of glutamine to glutamate and ammonia as part of the synthesis of IGP and AICAR. The resulting ammonia molecule is channeled to the active site of HisF. This Rhodospirillum rubrum (strain ATCC 11170 / ATH 1.1.1 / DSM 467 / LMG 4362 / NCIMB 8255 / S1) protein is Imidazole glycerol phosphate synthase subunit HisH.